The following is a 199-amino-acid chain: Pyridoxal 5'-phosphate synthase subunit PdxT (199 aa).

51–53 (GES) provides a ligand contact to L-glutamine. Cys83 (nucleophile) is an active-site residue. Residues Arg110 and 137 to 138 (IR) each bind L-glutamine. Catalysis depends on charge relay system residues His172 and Glu174.

It belongs to the glutaminase PdxT/SNO family. As to quaternary structure, in the presence of PdxS, forms a dodecamer of heterodimers. Only shows activity in the heterodimer.

The enzyme catalyses aldehydo-D-ribose 5-phosphate + D-glyceraldehyde 3-phosphate + L-glutamine = pyridoxal 5'-phosphate + L-glutamate + phosphate + 3 H2O + H(+). It catalyses the reaction L-glutamine + H2O = L-glutamate + NH4(+). It participates in cofactor biosynthesis; pyridoxal 5'-phosphate biosynthesis. Functionally, catalyzes the hydrolysis of glutamine to glutamate and ammonia as part of the biosynthesis of pyridoxal 5'-phosphate. The resulting ammonia molecule is channeled to the active site of PdxS. The protein is Pyridoxal 5'-phosphate synthase subunit PdxT of Thermoplasma volcanium (strain ATCC 51530 / DSM 4299 / JCM 9571 / NBRC 15438 / GSS1).